The sequence spans 673 residues: Cyclic nucleotide-binding domain-containing protein 2 (673 aa).

The span at Met-1–His-15 shows a compositional bias: polar residues. Residues Met-1–Gln-89 are disordered. Over residues Pro-43–Pro-86 the composition is skewed to basic and acidic residues. Position 206–329 (Cys-206–Arg-329) interacts with a nucleoside 3',5'-cyclic phosphate.

In terms of tissue distribution, testis-specific. Exclusively expressed in testicular germ cells while it is not present in mature sperm (at protein level).

It is found in the cytoplasm. The protein localises to the cytosol. Functionally, essential for male fertility. Plays an important role in spermatogenesis and regulates sperm motility by controlling the development of the flagellar bending of sperm. The polypeptide is Cyclic nucleotide-binding domain-containing protein 2 (Cnbd2) (Mus musculus (Mouse)).